The following is a 149-amino-acid chain: Putative mediator of RNA polymerase II transcription subunit 22 (149 aa).

The protein belongs to the Mediator complex subunit 22 family. As to quaternary structure, component of the Mediator complex.

Its subcellular location is the nucleus. Its function is as follows. Component of the Mediator complex, a coactivator involved in the regulated transcription of nearly all RNA polymerase II-dependent genes. Mediator functions as a bridge to convey information from gene-specific regulatory proteins to the basal RNA polymerase II transcription machinery. Mediator is recruited to promoters by direct interactions with regulatory proteins and serves as a scaffold for the assembly of a functional preinitiation complex with RNA polymerase II and the general transcription factors. The protein is Putative mediator of RNA polymerase II transcription subunit 22 (med22) of Dictyostelium discoideum (Social amoeba).